A 90-amino-acid polypeptide reads, in one-letter code: Small ribosomal subunit protein uS15c (90 aa).

This sequence belongs to the universal ribosomal protein uS15 family. As to quaternary structure, part of the 30S ribosomal subunit.

Its subcellular location is the plastid. It localises to the chloroplast. In Drimys granadensis, this protein is Small ribosomal subunit protein uS15c (rps15).